Consider the following 151-residue polypeptide: 3-hydroxyacyl-[acyl-carrier-protein] dehydratase FabZ (151 aa).

His-56 is an active-site residue.

Belongs to the thioester dehydratase family. FabZ subfamily.

It is found in the cytoplasm. The enzyme catalyses a (3R)-hydroxyacyl-[ACP] = a (2E)-enoyl-[ACP] + H2O. Its function is as follows. Involved in unsaturated fatty acids biosynthesis. Catalyzes the dehydration of short chain beta-hydroxyacyl-ACPs and long chain saturated and unsaturated beta-hydroxyacyl-ACPs. The chain is 3-hydroxyacyl-[acyl-carrier-protein] dehydratase FabZ from Rhodopseudomonas palustris (strain ATCC BAA-98 / CGA009).